A 362-amino-acid chain; its full sequence is Phospho-N-acetylmuramoyl-pentapeptide-transferase (362 aa).

10 consecutive transmembrane segments (helical) span residues 18 to 38 (VFGYITLRTVLAALTALAISL), 73 to 93 (TMGGALILIAIGITILLWGDL), 97 to 117 (YVWVTLLVTLGFGAVGWVDDW), 134 to 154 (YFWTSAIALGASIFLGLSATT), 160 to 180 (LIVPFFKAVAYPLGVYGFIAL), 200 to 220 (GLAIMPTVMVAGALAIFAYVA), 237 to 257 (AGELAVFCGAICGAGLGFLWF), 264 to 284 (VFMGDVGALALGAALGTIAVV), 289 to 309 (IVLFIMGGLFVAETLSVMVQV), and 339 to 359 (QVVVRFWIITLMLVLFGLSTL).

It belongs to the glycosyltransferase 4 family. MraY subfamily. Mg(2+) serves as cofactor.

It is found in the cell inner membrane. It carries out the reaction UDP-N-acetyl-alpha-D-muramoyl-L-alanyl-gamma-D-glutamyl-meso-2,6-diaminopimeloyl-D-alanyl-D-alanine + di-trans,octa-cis-undecaprenyl phosphate = di-trans,octa-cis-undecaprenyl diphospho-N-acetyl-alpha-D-muramoyl-L-alanyl-D-glutamyl-meso-2,6-diaminopimeloyl-D-alanyl-D-alanine + UMP. It participates in cell wall biogenesis; peptidoglycan biosynthesis. Catalyzes the initial step of the lipid cycle reactions in the biosynthesis of the cell wall peptidoglycan: transfers peptidoglycan precursor phospho-MurNAc-pentapeptide from UDP-MurNAc-pentapeptide onto the lipid carrier undecaprenyl phosphate, yielding undecaprenyl-pyrophosphoryl-MurNAc-pentapeptide, known as lipid I. The sequence is that of Phospho-N-acetylmuramoyl-pentapeptide-transferase from Azoarcus sp. (strain BH72).